Consider the following 962-residue polypeptide: Nonribosomal peptide synthetase atqA (962 aa).

An adenylation (A) domain region spans residues alanine 34 to isoleucine 462. The region spanning serine 595–serine 672 is the Carrier domain. Serine 630 carries the O-(pantetheine 4'-phosphoryl)serine modification. The tract at residues proline 694–lysine 951 is thioesterase (TE) domain.

Belongs to the NRP synthetase family.

It functions in the pathway secondary metabolite biosynthesis. Its function is as follows. Nonribosomal peptide synthetase; part of the gene cluster that mediates the biosynthesis of asterriquinone CT5, a natural product that displays potential biological activities including antitumor and insulin mimic activities. The nonribosomal peptide synthetase atqA is responsible for the production of the benzoquinone derivative didemethylasterriquinone D (DDAQ D), via condensation of 2 indole pyruvic acid (IPA) molecules. The symmetric connectivity of the 2 IPA molecules is thought to arise by head-to-tail dual Claisen condensations catalyzed by the TE domain of atqA. DDAQ D represents the core structure of asterriquinones and is further modified by yet unidentified tailoring enzymes to lead to the production of asterriquinone CT5. The protein is Nonribosomal peptide synthetase atqA of Aspergillus terreus (strain NIH 2624 / FGSC A1156).